Reading from the N-terminus, the 100-residue chain is Small ribosomal subunit protein uS14c (100 aa).

Belongs to the universal ribosomal protein uS14 family. As to quaternary structure, part of the 30S ribosomal subunit.

The protein resides in the plastid. It localises to the chloroplast. Functionally, binds 16S rRNA, required for the assembly of 30S particles. In Anthoceros angustus (Hornwort), this protein is Small ribosomal subunit protein uS14c.